The primary structure comprises 124 residues: Chemotaxis protein CheY1 (124 aa).

The Response regulatory domain occupies 2-120 (KLLVVDDSST…VLKEKLEVVL (119 aa)). 4 residues coordinate Mg(2+): D7, D8, D53, and N55. D53 carries the 4-aspartylphosphate modification.

As to quaternary structure, interacts (when phosphorylated) with FliM. Mg(2+) serves as cofactor. Phosphorylated by CheAY. Dephosphorylated (inactivated) by CheZ.

It localises to the cytoplasm. In terms of biological role, chemotactic response regulator protein that modulates the rotation direction of bacterial flagellar motors. Plays an important role in the colonization and infection of Helicobacter pylori. Upon phosphorylation by CheA, interacts with the flagellar motor protein FliM to cause clockwise flagellar rotation and bacterial reversals, as opposed to straight swimming when CheY1 is not phosphorylated. This Helicobacter pylori (strain J99 / ATCC 700824) (Campylobacter pylori J99) protein is Chemotaxis protein CheY1 (cheY1).